The chain runs to 477 residues: Cytochrome c oxidase subunit 1 (477 aa).

The chain crosses the membrane as a helical span at residues 16–36 (VGTMYLMLGMWSGFGGLNLSW). The Ca(2+) site is built by E41 and G46. H62 provides a ligand contact to Fe(II)-heme a. 6 consecutive transmembrane segments (helical) span residues 64–84 (IMMI…NWLL), 101–121 (FSFW…FIDY), 149–171 (ILGL…VTFL), 185–205 (LFVW…PVLA), 236–256 (LFWF…FGLV), and 269–289 (VFGS…GFIV). H242 is a Cu cation binding site. A cross-link (1'-histidyl-3'-tyrosine (His-Tyr)) is located at residues 242–246 (HPEVY). An O2-binding site is contributed by Y246. Residues H292 and H293 each contribute to the Cu cation site. Transmembrane regions (helical) follow at residues 309–329 (AVTM…IATI) and 340–360 (TLWV…GVIL). The Mg(2+) site is built by H370 and D371. Heme a3 is bound at residue H378. Position 380 (H380) interacts with Fe(II)-heme a. 2 helical membrane passes run 382–402 (VLSM…FPFF) and 416–436 (FFLT…LGLG). Residue P443 participates in Ca(2+) binding. Residues 455–475 (WSTIGCAMVMVSVSLFIHMQW) form a helical membrane-spanning segment.

It belongs to the heme-copper respiratory oxidase family. In terms of assembly, component of the cytochrome c oxidase (complex IV, CIV), a multisubunit enzyme composed of a catalytic core of 3 subunits and several supernumerary subunits. The complex exists as a monomer or a dimer and forms supercomplexes (SCs) in the inner mitochondrial membrane with ubiquinol-cytochrome c oxidoreductase (cytochrome b-c1 complex, complex III, CIII). Heme serves as cofactor. Requires Cu cation as cofactor.

The protein resides in the mitochondrion inner membrane. The catalysed reaction is 4 Fe(II)-[cytochrome c] + O2 + 8 H(+)(in) = 4 Fe(III)-[cytochrome c] + 2 H2O + 4 H(+)(out). It participates in energy metabolism; oxidative phosphorylation. Component of the cytochrome c oxidase, the last enzyme in the mitochondrial electron transport chain which drives oxidative phosphorylation. The respiratory chain contains 3 multisubunit complexes succinate dehydrogenase (complex II, CII), ubiquinol-cytochrome c oxidoreductase (cytochrome b-c1 complex, complex III, CIII) and cytochrome c oxidase (complex IV, CIV), that cooperate to transfer electrons derived from NADH and succinate to molecular oxygen, creating an electrochemical gradient over the inner membrane that drives transmembrane transport and the ATP synthase. Cytochrome c oxidase is the component of the respiratory chain that catalyzes the reduction of oxygen to water. Electrons originating from reduced cytochrome c in the intermembrane space (IMS) are transferred via the dinuclear copper A center (CU(A)) of subunit 2 and heme A of subunit 1 to the active site in subunit 1, a binuclear center (BNC) formed by heme A3 and copper B (CU(B)). The BNC reduces molecular oxygen to 2 water molecules using 4 electrons from cytochrome c in the IMS and 4 protons from the mitochondrial matrix. The chain is Cytochrome c oxidase subunit 1 (COI) from Pecten maximus (King scallop).